Here is a 337-residue protein sequence, read N- to C-terminus: uncharacterized protein (337 aa).

The 49-residue stretch at 12 to 60 folds into the F-box domain; that stretch reads SLNYVDLPDTVHRKIFEYLNPWEIFKLSRISKAIHVTILKNKKFAVKDI.

This is an uncharacterized protein from Caenorhabditis elegans.